A 406-amino-acid chain; its full sequence is Argininosuccinate synthase (406 aa).

Residues 13-21 (AYSGGLDTS) and alanine 40 contribute to the ATP site. L-citrulline contacts are provided by tyrosine 91 and serine 96. Glycine 121 contacts ATP. Threonine 123, asparagine 127, and aspartate 128 together coordinate L-aspartate. Position 127 (asparagine 127) interacts with L-citrulline. The L-citrulline site is built by arginine 131, serine 180, serine 189, glutamate 265, and tyrosine 277.

The protein belongs to the argininosuccinate synthase family. Type 1 subfamily. In terms of assembly, homotetramer.

It localises to the cytoplasm. The catalysed reaction is L-citrulline + L-aspartate + ATP = 2-(N(omega)-L-arginino)succinate + AMP + diphosphate + H(+). It functions in the pathway amino-acid biosynthesis; L-arginine biosynthesis; L-arginine from L-ornithine and carbamoyl phosphate: step 2/3. This is Argininosuccinate synthase from Syntrophotalea carbinolica (strain DSM 2380 / NBRC 103641 / GraBd1) (Pelobacter carbinolicus).